Here is a 506-residue protein sequence, read N- to C-terminus: Probable cytosol aminopeptidase (506 aa).

Lysine 278 and aspartate 283 together coordinate Mn(2+). Lysine 290 is an active-site residue. 3 residues coordinate Mn(2+): aspartate 301, aspartate 360, and glutamate 362. Arginine 364 is an active-site residue.

Belongs to the peptidase M17 family. Mn(2+) serves as cofactor.

It localises to the cytoplasm. It carries out the reaction Release of an N-terminal amino acid, Xaa-|-Yaa-, in which Xaa is preferably Leu, but may be other amino acids including Pro although not Arg or Lys, and Yaa may be Pro. Amino acid amides and methyl esters are also readily hydrolyzed, but rates on arylamides are exceedingly low.. The catalysed reaction is Release of an N-terminal amino acid, preferentially leucine, but not glutamic or aspartic acids.. Presumably involved in the processing and regular turnover of intracellular proteins. Catalyzes the removal of unsubstituted N-terminal amino acids from various peptides. The protein is Probable cytosol aminopeptidase of Ralstonia nicotianae (strain ATCC BAA-1114 / GMI1000) (Ralstonia solanacearum).